Here is a 268-residue protein sequence, read N- to C-terminus: Microtubule-associated protein RP/EB family member 1 (268 aa).

Position 2 is an N-acetylalanine (Ala2). A Calponin-homology (CH) domain is found at 14 to 116; sequence NLSRHDMLAW…FVQWFKKFFD (103 aa). Residue Lys66 is modified to N6-crotonyllysine. Phosphotyrosine is present on Tyr124. The interaction with MTUS2/TIP150 stretch occupies residues 124 to 268; the sequence is YDPVAARQGQ…GGPQEEQEEY (145 aa). The tract at residues 146–187 is disordered; it reads LNKPKKPLTSSSAAPQRPISTQRTAAAPKAGPGVVRKNPGVG. A compositionally biased stretch (polar residues) spans 153-169; sequence LTSSSAAPQRPISTQRT. Residues Ser155 and Ser165 each carry the phosphoserine modification. The EB1 C-terminal domain maps to 185–255; sequence GVGNGDDEAA…LYATDEGFVI (71 aa). Residues 185–268 are interaction with CDK5RAP2; it reads GVGNGDDEAA…GGPQEEQEEY (84 aa). Residues 206 to 211 are interaction with APC; it reads TVEDLE. Residues 208-268 are DCTN1-binding; it reads EDLEKERDFY…GGPQEEQEEY (61 aa). An N6-acetyllysine modification is found at Lys220. The interval 220-242 is APC-binding; sequence KLRNIELICQENEGENDPVLQRI. Positions 232–255 are interaction with SKA1; that stretch reads EGENDPVLQRIVDILYATDEGFVI.

This sequence belongs to the MAPRE family. As to quaternary structure, homodimer. Heterodimer with MAPRE3. Interacts with DCTN1, DCTN2, TERF1 and dynein intermediate chain. Interaction with DIAPH1 and DIAPH2. Interacts (via C-terminal residues 206-211) with APC (via C-terminal residues 2674-2843); the interaction inhibits association with and bundling of F-actin. Interacts with CLASP2, DST, KIF2C and STIM1; probably required for their targeting to the growing microtubule plus ends. Interacts with MTUS2; interaction is direct and probably targets MTUS2 to microtubules. Interacts (via C-terminus) with SKA1 (via SXIP motif); the interaction is direct and stabilizes the kinetochore-microtubule attachment of the SKA1 complex. Interacts with APC2. Interacts with CLASP1. Interacts with CDK5RAP2. Interacts with MACF1. Interacts with RABL2/RABL2A; binds preferentially to GTP-bound RABL2. Interacts with KCNAB2. Interacts (via C-terminus) with CLIP1. Interacts with SLAIN2 and SLAIN1. Interacts with KIF18B; this interaction is required for efficient accumulation of KIF18B at microtubule plus ends. Interacts with MISP. Interacts with KNSTRN. Interacts with NCKAP5L. Interacts with CAMSAP2. Interacts with PDE4DIP isoform 13/MMG8/SMYLE; this interaction is required for its recruitment to the Golgi apparatus. Forms a pericentrosomal complex with AKAP9, CDK5RAP2 and PDE4DIP isoform 13/MMG8/SMYLE; within this complex, MAPRE1 binding to CDK5RAP2 may be mediated by PDE4DIP. Interacts with AKNA. Interacts with GAS2L1, GAS2L2, and GAS2L3. Interacts with RARRES1 and AGBL2. In terms of processing, acetylation at Lys-220 by KAT2B/PCAF promotes dynamic kinetochore-microtubule interactions in early mitosis. Crotonylated by KAT5 during mitosis, promoting astral microtubule plasticity and dynamic connection between astral microtubules and the cortex during mitotic chromosome segregation, thereby ensuring accurate spindle positioning in mitosis. Decrotonylated by HDAC3. Ubiquitously expressed.

It localises to the cytoplasm. The protein resides in the cytoskeleton. It is found in the microtubule organizing center. Its subcellular location is the centrosome. The protein localises to the golgi apparatus. It localises to the spindle. The protein resides in the spindle pole. In terms of biological role, plus-end tracking protein (+TIP) that binds to the plus-end of microtubules and regulates the dynamics of the microtubule cytoskeleton. Recruits other +TIP proteins to microtubules by binding to a conserved Ser-X-Leu-Pro (SXLP) motif in their polypeptide chains. Promotes cytoplasmic microtubule nucleation and elongation. Involved in mitotic spindle positioning by stabilizing microtubules and promoting dynamic connection between astral microtubules and the cortex during mitotic chromosome segregation. Assists chromosome alignment in metaphase by recruiting the SKA complex to the spindle and stabilizing its interactions with microtubule bundles (K-fibers). Also acts as a regulator of minus-end microtubule organization: interacts with the complex formed by AKAP9 and PDE4DIP, leading to recruit CAMSAP2 to the Golgi apparatus, thereby tethering non-centrosomal minus-end microtubules to the Golgi, an important step for polarized cell movement. Promotes elongation of CAMSAP2-decorated microtubule stretches on the minus-end of microtubules. Acts as a regulator of autophagosome transport via interaction with CAMSAP2. Functions downstream of Rho GTPases and DIAPH1 in stable microtubule formation. May play a role in cell migration. This Homo sapiens (Human) protein is Microtubule-associated protein RP/EB family member 1.